The chain runs to 490 residues: Protein nucleotidyltransferase YdiU (490 aa).

8 residues coordinate ATP: Gly-89, Gly-91, Arg-92, Lys-112, Asp-124, Gly-125, Arg-175, and Arg-182. Asp-251 acts as the Proton acceptor in catalysis. The Mg(2+) site is built by Asn-252 and Asp-261. Asp-261 provides a ligand contact to ATP.

The protein belongs to the SELO family. Mg(2+) is required as a cofactor. Requires Mn(2+) as cofactor.

It carries out the reaction L-seryl-[protein] + ATP = 3-O-(5'-adenylyl)-L-seryl-[protein] + diphosphate. It catalyses the reaction L-threonyl-[protein] + ATP = 3-O-(5'-adenylyl)-L-threonyl-[protein] + diphosphate. The catalysed reaction is L-tyrosyl-[protein] + ATP = O-(5'-adenylyl)-L-tyrosyl-[protein] + diphosphate. The enzyme catalyses L-histidyl-[protein] + UTP = N(tele)-(5'-uridylyl)-L-histidyl-[protein] + diphosphate. It carries out the reaction L-seryl-[protein] + UTP = O-(5'-uridylyl)-L-seryl-[protein] + diphosphate. It catalyses the reaction L-tyrosyl-[protein] + UTP = O-(5'-uridylyl)-L-tyrosyl-[protein] + diphosphate. In terms of biological role, nucleotidyltransferase involved in the post-translational modification of proteins. It can catalyze the addition of adenosine monophosphate (AMP) or uridine monophosphate (UMP) to a protein, resulting in modifications known as AMPylation and UMPylation. In Vibrio vulnificus (strain CMCP6), this protein is Protein nucleotidyltransferase YdiU.